The chain runs to 150 residues: UPF0178 protein PBPRA1738 (150 aa).

This sequence belongs to the UPF0178 family.

The protein is UPF0178 protein PBPRA1738 of Photobacterium profundum (strain SS9).